A 287-amino-acid polypeptide reads, in one-letter code: CRISPR-associated endoribonuclease Cas6 1 (287 aa).

Belongs to the CRISPR-associated endoribonuclease Cas6 family. As to quaternary structure, part of the aCascade ribonucleoprotein complex, minimally composed of Csa2 and Cas5a, which binds crRNA. Other possible components of aCascade in strain P1 are Cas6b (SSO1437) and Csa5 (SSO1443), while SSO1399, Cas5b (SSO1400) and SSO1401 have sometimes been seen weakly associated. Csa2 is probably the major RNA-binding subunit. The Csa2-Cas5a-crRNA complex also binds target DNA homologous to crRNA, probably forming an R-loop. Purified aCascade forms a filament about 6 nm in width.

Its function is as follows. CRISPR (clustered regularly interspaced short palindromic repeat) is an adaptive immune system that provides protection against mobile genetic elements (viruses, transposable elements and conjugative plasmids). CRISPR clusters contain spacers, sequences complementary to antecedent mobile elements, and target invading nucleic acids. CRISPR clusters are transcribed and processed into CRISPR RNA (crRNA). This Saccharolobus solfataricus (strain ATCC 35092 / DSM 1617 / JCM 11322 / P2) (Sulfolobus solfataricus) protein is CRISPR-associated endoribonuclease Cas6 1 (cas6a).